The primary structure comprises 217 residues: Uracil-DNA glycosylase (217 aa).

D62 acts as the Proton acceptor in catalysis.

Belongs to the uracil-DNA glycosylase (UDG) superfamily. UNG family.

Its subcellular location is the cytoplasm. The enzyme catalyses Hydrolyzes single-stranded DNA or mismatched double-stranded DNA and polynucleotides, releasing free uracil.. Its function is as follows. Excises uracil residues from the DNA which can arise as a result of misincorporation of dUMP residues by DNA polymerase or due to deamination of cytosine. This chain is Uracil-DNA glycosylase, found in Streptococcus pneumoniae (strain JJA).